We begin with the raw amino-acid sequence, 183 residues long: NEDD8-conjugating enzyme Ubc12 (183 aa).

The residue at position 1 (Met-1) is an N-acetylmethionine. A disordered region spans residues 1-28; sequence MIKLFSLKQQKKEEESAGGTKGSSKKAS. One can recognise a UBC core domain in the interval 29–173; it reads AAQLRIQKDI…VQRSMRGGYI (145 aa). The Glycyl thioester intermediate role is filled by Cys-111.

The protein belongs to the ubiquitin-conjugating enzyme family. UBC12 subfamily. Post-translationally, the acetylation of Met-1 increases affinity for DCUN1D1 by about 2 orders of magnitude and is crucial for NEDD8 transfer to cullins.

It catalyses the reaction [E1 NEDD8-activating enzyme]-S-[NEDD8 protein]-yl-L-cysteine + [E2 NEDD8-conjugating enzyme]-L-cysteine = [E1 NEDD8-activating enzyme]-L-cysteine + [E2 NEDD8-conjugating enzyme]-S-[NEDD8-protein]-yl-L-cysteine.. Its pathway is protein modification; protein neddylation. Accepts the ubiquitin-like protein NEDD8 from the UBA3-NAE1 E1 complex and catalyzes its covalent attachment to other proteins. The specific interaction with the E3 ubiquitin ligase rbx1, but not rbx2, suggests that the rbx1-ube2m complex neddylates specific target proteins, such as cul1, cul2, cul3 and cul4. Involved in cell proliferation. This Xenopus laevis (African clawed frog) protein is NEDD8-conjugating enzyme Ubc12 (ube2m).